A 582-amino-acid chain; its full sequence is Vacuolar basic amino acid transporter 5 (582 aa).

Residues 1–44 (MEETKYSSQQEIEGACGSDASLNARGSNDSPMGLSLYLCLASLT) lie on the Cytoplasmic side of the membrane. Residues 45–65 (LVLFITALDILIVGTIIDVVA) traverse the membrane as a helical segment. The Vacuolar portion of the chain corresponds to 66 to 80 (EQFGNYSKTGWLVTG). Asparagine 70 is a glycosylation site (N-linked (GlcNAc...) asparagine). The helical transmembrane segment at 81 to 101 (YSLPNAILSLIWGRFASIIGF) threads the bilayer. The Cytoplasmic portion of the chain corresponds to 102 to 104 (QHS). A helical transmembrane segment spans residues 105 to 125 (LILAILIFEAGSLIAALASSM). The Vacuolar portion of the chain corresponds to 126–132 (NMLIFGR). A helical transmembrane segment spans residues 133–153 (VVAGVGGSGLQTLCFVIGCTM). Topologically, residues 154 to 160 (VGERSRP) are cytoplasmic. A helical transmembrane segment spans residues 161–181 (LVISILSCAFAVAAIVGPIIG). The Vacuolar segment spans residues 182-191 (GAFTTHVTWR). A helical membrane pass occupies residues 192–212 (WCFYINLPIGGLAIIMFLLTY). The Cytoplasmic segment spans residues 213–256 (KAENKGILQQIKDAIGTISSFTFSKFRHQVNFKRLMNGIIFKFD). Residues 257 to 277 (FFGFALCSAGLVLFLLGLTFG) form a helical membrane-spanning segment. Topologically, residues 278-287 (GNKYSWNSGQ) are vacuolar. Residues 288–308 (VITYLVLGVLLFIFSLVYDFF) traverse the membrane as a helical segment. Residues 309–329 (LFDKFNPEPDNISYRPLLLRR) lie on the Cytoplasmic side of the membrane. Residues 330–350 (LVAKPAIIIVNMVTFLLCTGY) form a helical membrane-spanning segment. The Vacuolar segment spans residues 351-372 (NGQMIYSVQFFQLIFASSAWKA). The chain crosses the membrane as a helical span at residues 373 to 393 (GLHLIPIVITNVIAAIASGVI). Topologically, residues 394 to 401 (TKKLGLVK) are cytoplasmic. The chain crosses the membrane as a helical span at residues 402–422 (PLLIFGGVLGVIGAGLMTLMT). Asparagine 423 carries an N-linked (GlcNAc...) asparagine glycan. Over 423 to 430 (NTSTKSTQ) the chain is Vacuolar. The chain crosses the membrane as a helical span at residues 431–451 (IGVLLLPGFSLGFALQASLMS). The Cytoplasmic portion of the chain corresponds to 452–469 (AQLQITKDRPEAAMDFIE). A helical membrane pass occupies residues 470-492 (VTAFNTFMKSLGTTLGGVLSTTV). Residues 493–539 (FSASFHNKVSRAHLEPYEGKTVDDMILYRLQNYDGSHSTIGNILSDS) lie on the Vacuolar side of the membrane. Residues 540–560 (IKNVFWMDLGFYALGFLFCSF) traverse the membrane as a helical segment. Residues 561-582 (SSNKKLIIPKKDDTPEDNLEDK) lie on the Cytoplasmic side of the membrane.

The protein belongs to the major facilitator superfamily.

Its subcellular location is the vacuole membrane. Its function is as follows. Transporter required for vacuolar uptake of basic amino acids. This chain is Vacuolar basic amino acid transporter 5 (VBA5), found in Saccharomyces cerevisiae (strain ATCC 204508 / S288c) (Baker's yeast).